A 259-amino-acid chain; its full sequence is Hydroxyethylthiazole kinase (259 aa).

M38 is a substrate binding site. R113 and S158 together coordinate ATP. G185 is a binding site for substrate.

It belongs to the Thz kinase family. The cofactor is Mg(2+).

It catalyses the reaction 5-(2-hydroxyethyl)-4-methylthiazole + ATP = 4-methyl-5-(2-phosphooxyethyl)-thiazole + ADP + H(+). The protein operates within cofactor biosynthesis; thiamine diphosphate biosynthesis; 4-methyl-5-(2-phosphoethyl)-thiazole from 5-(2-hydroxyethyl)-4-methylthiazole: step 1/1. Catalyzes the phosphorylation of the hydroxyl group of 4-methyl-5-beta-hydroxyethylthiazole (THZ). This is Hydroxyethylthiazole kinase from Leuconostoc citreum (strain KM20).